The following is a 185-amino-acid chain: Ribosome-recycling factor (185 aa).

It belongs to the RRF family.

The protein localises to the cytoplasm. Responsible for the release of ribosomes from messenger RNA at the termination of protein biosynthesis. May increase the efficiency of translation by recycling ribosomes from one round of translation to another. In Ehrlichia ruminantium (strain Gardel), this protein is Ribosome-recycling factor.